Consider the following 1020-residue polypeptide: Calcium-transporting ATPase sarcoplasmic/endoplasmic reticulum type (1020 aa).

Over 1–48 (MEDGHSKTVEQSLNFFGTDPERGLTLDQIKANQKKYGPNELPTEEGKS) the chain is Cytoplasmic. The helical transmembrane segment at 49-69 (IWQLVLEQFDDLLVKILLLAA) threads the bilayer. The Lumenal portion of the chain corresponds to 70–89 (IISFVLALFEEHEETFTAFV). Residues 90–110 (EPLVILLILIANAVVGVWQER) form a helical membrane-spanning segment. At 111–253 (NAESAIEALK…EIKTPLQQKL (143 aa)) the chain is on the cytoplasmic side. Phosphoserine is present on Ser240. Residues 254 to 273 (DEFGEQLSKVISVICVAVWA) form a helical membrane-spanning segment. The Lumenal segment spans residues 274–295 (INIGHFNDPAHGGSWIKGAIYY). Residues 296 to 313 (FKIAVALAVAAIPEGLPA) traverse the membrane as a helical segment. Val304, Ala305, Ile307, and Glu309 together coordinate Ca(2+). Over 314 to 757 (VITTCLALGT…EEGRAIYNNM (444 aa)) the chain is Cytoplasmic. Residue Asp351 is the 4-aspartylphosphate intermediate of the active site. Residues Asp703 and Asp707 each coordinate Mg(2+). Residues 758–777 (KQFIRYLISSNIGEVVSIFL) traverse the membrane as a helical segment. Residues Asn768 and Glu771 each contribute to the Ca(2+) site. The Lumenal segment spans residues 778 to 787 (TAALGLPEAL). A helical transmembrane segment spans residues 788–808 (IPVQLLWVNLVTDGLPATALG). 3 residues coordinate Ca(2+): Asn796, Thr799, and Asp800. Residues 809 to 828 (FNPPDLDIMEKPPRKADEGL) lie on the Cytoplasmic side of the membrane. The helical transmembrane segment at 829 to 851 (ISGWLFFRYMAIGFYVGAATVGA) threads the bilayer. Residues 852 to 897 (AAWWFVFSDEGPKLSYWQLTHHLSCLGGGDEFKGVDCKIFSDPHAM) are Lumenal-facing. A helical transmembrane segment spans residues 898–917 (TMALSVLVTIEMLNAMNSLS). Residue Glu908 participates in Ca(2+) binding. Residues 918–930 (ENQSLITMPPWCN) lie on the Cytoplasmic side of the membrane. The helical transmembrane segment at 931-949 (LWLIGSMALSFTLHFVILY) threads the bilayer. At 950–964 (VDVLSTVFQVTPLSA) the chain is on the lumenal side. The chain crosses the membrane as a helical span at residues 965–985 (EEWITVMKFSIPVVLLDETLK). Residues 986–1020 (FVARKIADGESPIYKMHGIVLMWAVFFGLLYAMML) are Cytoplasmic-facing.

It belongs to the cation transport ATPase (P-type) (TC 3.A.3) family. Interacts with SclA and SclB.

It is found in the endoplasmic reticulum membrane. It localises to the sarcoplasmic reticulum membrane. It catalyses the reaction Ca(2+)(in) + ATP + H2O = Ca(2+)(out) + ADP + phosphate + H(+). In terms of biological role, this magnesium-dependent enzyme catalyzes the hydrolysis of ATP coupled with the transport of calcium. This chain is Calcium-transporting ATPase sarcoplasmic/endoplasmic reticulum type, found in Drosophila melanogaster (Fruit fly).